Here is a 407-residue protein sequence, read N- to C-terminus: Digeranylgeranylglycerophospholipid reductase (407 aa).

Residues alanine 15, glutamate 34, cysteine 45, alanine 46, glycine 48, arginine 99, alanine 123, aspartate 281, glycine 293, and isoleucine 294 each coordinate FAD.

It belongs to the geranylgeranyl reductase family. DGGGPL reductase subfamily. FAD is required as a cofactor.

The catalysed reaction is a 2,3-bis-O-phytanyl-sn-glycerol 1-phospholipid + 8 oxidized 2[4Fe-4S]-[ferredoxin] = a 2,3-bis-O-(geranylgeranyl)-sn-glycerol 1-phospholipid + 8 reduced 2[4Fe-4S]-[ferredoxin] + 16 H(+). It carries out the reaction 2,3-bis-O-(phytanyl)-sn-glycerol 1-phosphate + 8 oxidized 2[4Fe-4S]-[ferredoxin] = 2,3-bis-O-(geranylgeranyl)-sn-glycerol 1-phosphate + 8 reduced 2[4Fe-4S]-[ferredoxin] + 16 H(+). It catalyses the reaction a 2,3-bis-O-phytanyl-sn-glycerol 1-phospholipid + 8 A = a 2,3-bis-O-(geranylgeranyl)-sn-glycerol 1-phospholipid + 8 AH2. The enzyme catalyses CDP-2,3-bis-O-(geranylgeranyl)-sn-glycerol + 8 AH2 = CDP-2,3-bis-O-(phytanyl)-sn-glycerol + 8 A. The catalysed reaction is archaetidylserine + 8 AH2 = 2,3-bis-O-phytanyl-sn-glycero-3-phospho-L-serine + 8 A. It participates in membrane lipid metabolism; glycerophospholipid metabolism. Its function is as follows. Is involved in the reduction of 2,3-digeranylgeranylglycerophospholipids (unsaturated archaeols) into 2,3-diphytanylglycerophospholipids (saturated archaeols) in the biosynthesis of archaeal membrane lipids. Catalyzes the formation of archaetidic acid (2,3-di-O-phytanyl-sn-glyceryl phosphate) from 2,3-di-O-geranylgeranylglyceryl phosphate (DGGGP) via the hydrogenation of each double bond of the isoprenoid chains. Is also probably able to reduce double bonds of geranyl groups in CDP-2,3-bis-O-(geranylgeranyl)-sn-glycerol and archaetidylserine, thus acting at various stages in the biosynthesis of archaeal membrane lipids. The sequence is that of Digeranylgeranylglycerophospholipid reductase from Methanosarcina mazei (strain ATCC BAA-159 / DSM 3647 / Goe1 / Go1 / JCM 11833 / OCM 88) (Methanosarcina frisia).